A 377-amino-acid chain; its full sequence is N-acetyldiaminopimelate deacetylase (377 aa).

Asp70 is an active-site residue. The active-site Proton acceptor is the Glu129.

It belongs to the peptidase M20A family. N-acetyldiaminopimelate deacetylase subfamily.

It carries out the reaction N-acetyl-(2S,6S)-2,6-diaminopimelate + H2O = (2S,6S)-2,6-diaminopimelate + acetate. It functions in the pathway amino-acid biosynthesis; L-lysine biosynthesis via DAP pathway; LL-2,6-diaminopimelate from (S)-tetrahydrodipicolinate (acetylase route): step 3/3. Functionally, catalyzes the conversion of N-acetyl-diaminopimelate to diaminopimelate and acetate. This chain is N-acetyldiaminopimelate deacetylase, found in Geobacillus thermodenitrificans (strain NG80-2).